The following is an 826-amino-acid chain: G-protein coupled receptor-associated sorting protein 2 (826 aa).

Disordered stretches follow at residues 1 to 126 (MTGA…AQAW), 204 to 286 (WCYP…NPFC), 336 to 371 (EGNRFRRRDKEEPNKTLKNENEKDVKNDETVEQESR), and 506 to 534 (IPEGASGNSEEKAKNAELGAEGEEQDSVA). Residues 13–31 (KPDKKPQEEVAGGAERESE) are compositionally biased toward basic and acidic residues. Positions 59-73 (SSRARPKTETQSVSG) are enriched in polar residues. The span at 231–247 (TREETSIRSWPREEVNT) shows a compositional bias: basic and acidic residues. The span at 248-264 (RSRHRAKHQTNARSKPR) shows a compositional bias: basic residues. Phosphoserine is present on residues serine 275 and serine 277.

The protein belongs to the GPRASP family. As to quaternary structure, interacts with cytoplasmic tails of a variety of G-protein coupled receptors such as muscarinic acetylcholine receptor M1/CHRM1 and calcitonin receptor/CALCR. In terms of tissue distribution, strongly expressed in the brain and the cochlea. Also in lung and muscle tissues. Localized in multiple structures of the cochlea, detected in the spiral ganglion, stria vascularis, spiral ligament, inner and outer hair cells.

Its function is as follows. May play a role in regulation of a variety of G-protein coupled receptors. This is G-protein coupled receptor-associated sorting protein 2 (Gprasp2) from Mus musculus (Mouse).